The sequence spans 402 residues: Acetate kinase (402 aa).

Asparagine 7 serves as a coordination point for Mg(2+). Lysine 14 provides a ligand contact to ATP. Residue arginine 95 participates in substrate binding. Residue aspartate 152 is the Proton donor/acceptor of the active site. Residues 212 to 216 (HLGNG), 286 to 288 (DMR), and 334 to 338 (GIGEN) contribute to the ATP site. A Mg(2+)-binding site is contributed by glutamate 388.

It belongs to the acetokinase family. Homodimer. It depends on Mg(2+) as a cofactor. The cofactor is Mn(2+).

Its subcellular location is the cytoplasm. The enzyme catalyses acetate + ATP = acetyl phosphate + ADP. It participates in metabolic intermediate biosynthesis; acetyl-CoA biosynthesis; acetyl-CoA from acetate: step 1/2. Its function is as follows. Catalyzes the formation of acetyl phosphate from acetate and ATP. Can also catalyze the reverse reaction. This Nitratidesulfovibrio vulgaris (strain DP4) (Desulfovibrio vulgaris) protein is Acetate kinase.